A 213-amino-acid chain; its full sequence is ATP synthase peripheral stalk subunit OSCP, mitochondrial (213 aa).

The N-terminal 23 residues, 1–23, are a transit peptide targeting the mitochondrion; that stretch reads MASQAVSGLSRQVRCFSTSVVRP. Positions 5-23 match the SIFI-degron motif; sequence AVSGLSRQVRCFSTSVVRP. 4 positions are modified to N6-acetyllysine: lysine 54, lysine 60, lysine 70, and lysine 73. Lysine 90 carries the N6-succinyllysine modification. N6-acetyllysine; alternate occurs at positions 100, 158, and 162. N6-succinyllysine; alternate is present on residues lysine 100, lysine 158, and lysine 162. Lysine 172, lysine 176, and lysine 192 each carry N6-acetyllysine. The residue at position 199 (lysine 199) is an N6-succinyllysine.

The protein belongs to the ATPase delta chain family. In terms of assembly, component of the ATP synthase complex composed at least of ATP5F1A/subunit alpha, ATP5F1B/subunit beta, ATP5MC1/subunit c (homooctomer), MT-ATP6/subunit a, MT-ATP8/subunit 8, ATP5ME/subunit e, ATP5MF/subunit f, ATP5MG/subunit g, ATP5MK/subunit k, ATP5MJ/subunit j, ATP5F1C/subunit gamma, ATP5F1D/subunit delta, ATP5F1E/subunit epsilon, ATP5PF/subunit F6, ATP5PB/subunit b, ATP5PD/subunit d, ATP5PO/subunit OSCP. ATP synthase complex consists of a soluble F(1) head domain (subunits alpha(3) and beta(3)) - the catalytic core - and a membrane F(0) domain - the membrane proton channel (subunits c, a, 8, e, f, g, k and j). These two domains are linked by a central stalk (subunits gamma, delta, and epsilon) rotating inside the F1 region and a stationary peripheral stalk (subunits F6, b, d, and OSCP). Acetylation at Lys-162 decreases ATP production. Deacetylated by SIRT3. In terms of processing, in response to mitochondrial stress, the precursor protein is ubiquitinated by the SIFI complex in the cytoplasm before mitochondrial import, leading to its degradation. Within the SIFI complex, UBR4 initiates ubiquitin chain that are further elongated or branched by KCMF1.

The protein localises to the mitochondrion. It localises to the mitochondrion inner membrane. Functionally, subunit OSCP, of the mitochondrial membrane ATP synthase complex (F(1)F(0) ATP synthase or Complex V) that produces ATP from ADP in the presence of a proton gradient across the membrane which is generated by electron transport complexes of the respiratory chain. ATP synthase complex consist of a soluble F(1) head domain - the catalytic core - and a membrane F(1) domain - the membrane proton channel. These two domains are linked by a central stalk rotating inside the F(1) region and a stationary peripheral stalk. During catalysis, ATP synthesis in the catalytic domain of F(1) is coupled via a rotary mechanism of the central stalk subunits to proton translocation. In vivo, can only synthesize ATP although its ATP hydrolase activity can be activated artificially in vitro. Part of the complex F(0) domain. Part of the complex F(0) domain and the peripheric stalk, which acts as a stator to hold the catalytic alpha(3)beta(3) subcomplex and subunit a/ATP6 static relative to the rotary elements. The chain is ATP synthase peripheral stalk subunit OSCP, mitochondrial from Sus scrofa (Pig).